Consider the following 178-residue polypeptide: Nicotinamide-nucleotide adenylyltransferase (178 aa).

It belongs to the archaeal NMN adenylyltransferase family.

It is found in the cytoplasm. The catalysed reaction is beta-nicotinamide D-ribonucleotide + ATP + H(+) = diphosphate + NAD(+). The protein operates within cofactor biosynthesis; NAD(+) biosynthesis; NAD(+) from nicotinamide D-ribonucleotide: step 1/1. This chain is Nicotinamide-nucleotide adenylyltransferase, found in Pyrobaculum arsenaticum (strain DSM 13514 / JCM 11321 / PZ6).